Reading from the N-terminus, the 212-residue chain is MAETKEFKTLYNLFIDSYLQKLAQHSIPTNVTCAIHIGEVIGQFKNCALRITNKCMSNSRLSFTLMVESFIEVISLLPEKDRRAIAEEIGIDLDDVPSVVSKLEKNCNAYAEVNNIIDIQKLNIGECSAPPGQHMLLQIVNTGSAEANCGLQTIVKSLNKIYVPPIIENRLPYYDPWFLVGVAIILVIFTVAICSIRRNLALKYRYGTFLYV.

Residues 1–175 lie on the Virion surface side of the membrane; it reads MAETKEFKTL…IIENRLPYYD (175 aa). Intrachain disulfides connect Cys33–Cys55, Cys47–Cys127, and Cys107–Cys149. A helical membrane pass occupies residues 176–196; sequence PWFLVGVAIILVIFTVAICSI. Residues 197 to 212 lie on the Intravirion side of the membrane; the sequence is RRNLALKYRYGTFLYV.

Belongs to the orthopoxvirus OPG053 family. Component of the entry fusion complex (EFC) composed of OPG053, OPG076, OPG086, OPG094, OPG095, OPG099, OPG107, OPG143, OPG104, OPG147 and OPG155. Except for OPG095 and OPG052, each of the EFC proteins is required for assembly or stability of the complex. Disulfid bonds are oxidized in the cytoplasm by OPG088 protein. In terms of processing, unglycosylated because produced in viral factories instead of the classic ER -Golgi route.

Its subcellular location is the virion membrane. Its function is as follows. Component of the entry fusion complex (EFC), which consists of 11 proteins. During cell infection, this complex mediates entry of the virion core into the host cytoplasm by a two-step mechanism consisting of lipid mixing of the viral and cellular membranes and subsequent pore formation. The polypeptide is EFC-associated protein OPG053 (OPG053) (Monkeypox virus).